Consider the following 298-residue polypeptide: MNPGYRGRFAPSPTGPLHFGSLVGALASWLDARAHGGVWLVRIEDLDGPRTVPGAADDILATLAHFGMTPDEPPVWQSTRDAAYTAALERLVAAGLVYPCGCTRKEIADSLRAAHERHTTLAYPGTCRTGLHGKPARAWRLRVPDGCDAVITFDDRWQHTQSQNLATEVGDFVLKRADGQWAYQLAVVVDDADAGITHVVRGADLLDSTARQIYLQRCLGVPTPEYLHVPVVVDANGEKLSKQTGATALERNDPLPALQAAAAHLGLANDGDLPGGTLDAFYAAATDAWARRFGPRAG.

Residues 8 to 12 (RFAPS) and glutamate 44 contribute to the L-glutamate site. The short motif at 11–21 (PSPTGPLHFGS) is the 'HIGH' region element. The Zn(2+) site is built by cysteine 100, cysteine 102, tyrosine 123, and cysteine 127. Residues tyrosine 183 and arginine 201 each contribute to the L-glutamate site. The 'KMSKS' region signature appears at 239–243 (KLSKQ). Lysine 242 contributes to the ATP binding site.

This sequence belongs to the class-I aminoacyl-tRNA synthetase family. GluQ subfamily. It depends on Zn(2+) as a cofactor.

In terms of biological role, catalyzes the tRNA-independent activation of glutamate in presence of ATP and the subsequent transfer of glutamate onto a tRNA(Asp). Glutamate is transferred on the 2-amino-5-(4,5-dihydroxy-2-cyclopenten-1-yl) moiety of the queuosine in the wobble position of the QUC anticodon. The sequence is that of Glutamyl-Q tRNA(Asp) synthetase from Burkholderia orbicola (strain AU 1054).